The chain runs to 113 residues: Ribulose bisphosphate carboxylase small subunit (113 aa).

This sequence belongs to the RuBisCO small chain family. Heterohexadecamer of 8 large and 8 small subunits.

It localises to the carboxysome. Its function is as follows. RuBisCO catalyzes two reactions: the carboxylation of D-ribulose 1,5-bisphosphate, the primary event in carbon dioxide fixation, as well as the oxidative fragmentation of the pentose substrate in the photorespiration process. Both reactions occur simultaneously and in competition at the same active site. Although the small subunit is not catalytic it is essential for maximal activity. The chain is Ribulose bisphosphate carboxylase small subunit from Synechococcus sp. (strain WH7803).